Here is a 67-residue protein sequence, read N- to C-terminus: Vespin (67 aa).

The N-terminal stretch at 1–21 is a signal peptide; that stretch reads MHPIIWELSHMVDLQAAAQKL.

Expressed by the venom gland.

Its subcellular location is the secreted. Shows contractile activity on isolated ileum smooth muscle. In Vespa magnifica (Hornet), this protein is Vespin.